We begin with the raw amino-acid sequence, 1113 residues long: Translation initiation factor IF-2 (1113 aa).

4 stretches are compositionally biased toward polar residues: residues 56–72, 129–139, 162–187, and 194–205; these read QSNQSINNKTKQNSSKE, KANTSNQSKGV, LENNASKQNIEDNNNFQERSPRTQLV, and TKNNEPPQQKTS. Disordered stretches follow at residues 56–446 and 470–504; these read QSNQ…IGEN and LARPAKPKSTKKSNSKATVVTRKRKKESTRQRQRR. A compositionally biased stretch (low complexity) spans 248–265; it reads PVQPRTQNNQNRQRIPNK. Residues 415 to 429 are compositionally biased toward basic and acidic residues; that stretch reads RRSDWDDAAKLEALR. 2 stretches are compositionally biased toward basic residues: residues 474 to 483 and 490 to 504; these read AKPKSTKKSN and TRKRKKESTRQRQRR. A tr-type G domain is found at 605-777; it reads RRPPVVTVMG…VLLVTEVEDL (173 aa). A G1 region spans residues 614–621; that stretch reads GHVDHGKT. 614 to 621 serves as a coordination point for GTP; the sequence is GHVDHGKT. The interval 639-643 is G2; that stretch reads GITQH. The G3 stretch occupies residues 664 to 667; sequence DTPG. GTP contacts are provided by residues 664–668 and 718–721; these read DTPGH and NKID. Residues 718–721 form a G4 region; the sequence is NKID. Residues 754–756 are G5; it reads SAI.

It belongs to the TRAFAC class translation factor GTPase superfamily. Classic translation factor GTPase family. IF-2 subfamily.

Its subcellular location is the cytoplasm. In terms of biological role, one of the essential components for the initiation of protein synthesis. Protects formylmethionyl-tRNA from spontaneous hydrolysis and promotes its binding to the 30S ribosomal subunits. Also involved in the hydrolysis of GTP during the formation of the 70S ribosomal complex. This chain is Translation initiation factor IF-2, found in Prochlorococcus marinus (strain MIT 9211).